A 203-amino-acid polypeptide reads, in one-letter code: ATP-dependent Clp protease proteolytic subunit (203 aa).

Serine 107 (nucleophile) is an active-site residue. The active site involves histidine 132.

The protein belongs to the peptidase S14 family. Fourteen ClpP subunits assemble into 2 heptameric rings which stack back to back to give a disk-like structure with a central cavity, resembling the structure of eukaryotic proteasomes.

Its subcellular location is the cytoplasm. It carries out the reaction Hydrolysis of proteins to small peptides in the presence of ATP and magnesium. alpha-casein is the usual test substrate. In the absence of ATP, only oligopeptides shorter than five residues are hydrolyzed (such as succinyl-Leu-Tyr-|-NHMec, and Leu-Tyr-Leu-|-Tyr-Trp, in which cleavage of the -Tyr-|-Leu- and -Tyr-|-Trp bonds also occurs).. Functionally, cleaves peptides in various proteins in a process that requires ATP hydrolysis. Has a chymotrypsin-like activity. Plays a major role in the degradation of misfolded proteins. The sequence is that of ATP-dependent Clp protease proteolytic subunit from Shewanella loihica (strain ATCC BAA-1088 / PV-4).